A 334-amino-acid polypeptide reads, in one-letter code: Dihydroorotate dehydrogenase (quinone) (334 aa).

Residues 59–63 (AGLDK) and Thr-83 contribute to the FMN site. Lys-63 is a substrate binding site. 108 to 112 (NRMGF) is a binding site for substrate. Residues Asn-136 and Asn-169 each coordinate FMN. Substrate is bound at residue Asn-169. The active-site Nucleophile is Ser-172. Asn-174 is a substrate binding site. Residues Lys-214 and Thr-242 each contribute to the FMN site. A substrate-binding site is contributed by 243 to 244 (NT). FMN contacts are provided by residues Gly-265, Gly-294, and 315–316 (YS).

It belongs to the dihydroorotate dehydrogenase family. Type 2 subfamily. Monomer. Requires FMN as cofactor.

Its subcellular location is the cell membrane. The enzyme catalyses (S)-dihydroorotate + a quinone = orotate + a quinol. The protein operates within pyrimidine metabolism; UMP biosynthesis via de novo pathway; orotate from (S)-dihydroorotate (quinone route): step 1/1. In terms of biological role, catalyzes the conversion of dihydroorotate to orotate with quinone as electron acceptor. This Acinetobacter baumannii (strain SDF) protein is Dihydroorotate dehydrogenase (quinone).